A 1342-amino-acid polypeptide reads, in one-letter code: Putative aldehyde oxidase-like protein (1342 aa).

A disordered region spans residues 1–23; the sequence is MSDCNSGGGERRPNARATDAPPV. The FAD-binding PCMH-type domain occupies 221-408; it reads ISSPREGWYC…LSIFIPHWAS (188 aa).

It belongs to the xanthine dehydrogenase family.

The protein is Putative aldehyde oxidase-like protein of Oryza sativa subsp. japonica (Rice).